The chain runs to 289 residues: MALVPGRSKEDGLWTRNSPGSSQHPESPRLPNPLWDRGKIGKVEGHQHIQVSTSSACVWQLAYPPVWPNLPAVPIQDFSQKSHLPSIVVESSEVNEESGDLHLPHEELLLLTDGEEEDAEAFFQDQSEEPGWAWSPQDPRSPLRTFNAGLSWGQDQDEEDACWILEDTACLEATNHCPFWDSTGSRVCRSGFVEYSHLLPPNSFEGAEEEAVQTPAGVESGAASEAPGGRGCDRPRADHAAPPQEAGVQCTCQHYTVREEAQKTPPADPACPEREDSHGSGSPFKASQD.

2 disordered regions span residues 1 to 36 and 205 to 289; these read MALV…PLWD and EGAE…ASQD. An LBH domain is found at 1 to 128; it reads MALVPGRSKE…AEAFFQDQSE (128 aa). Residues 15–25 show a composition bias toward polar residues; it reads TRNSPGSSQHP.

Expressed in bladder cancer tissues (at protein level).

The sequence is that of LBH domain-containing protein 1 from Homo sapiens (Human).